A 240-amino-acid polypeptide reads, in one-letter code: Sugar fermentation stimulation protein homolog (240 aa).

This sequence belongs to the SfsA family.

This chain is Sugar fermentation stimulation protein homolog, found in Natranaerobius thermophilus (strain ATCC BAA-1301 / DSM 18059 / JW/NM-WN-LF).